A 142-amino-acid chain; its full sequence is Peptide methionine sulfoxide reductase MsrB (142 aa).

Residues 2–125 (IKKNKEELND…NSAAIQFIPY (124 aa)) enclose the MsrB domain. Cys114 functions as the Nucleophile in the catalytic mechanism.

The protein belongs to the MsrB Met sulfoxide reductase family.

The catalysed reaction is L-methionyl-[protein] + [thioredoxin]-disulfide + H2O = L-methionyl-(R)-S-oxide-[protein] + [thioredoxin]-dithiol. The sequence is that of Peptide methionine sulfoxide reductase MsrB from Staphylococcus epidermidis (strain ATCC 35984 / DSM 28319 / BCRC 17069 / CCUG 31568 / BM 3577 / RP62A).